The following is a 144-amino-acid chain: IgW chain C region, secreted form 1/3 (144 aa).

In terms of domain architecture, Ig-like spans 1 to 82; sequence VYNQTTAVLG…AGSRFNDRIS (82 aa). 3 N-linked (GlcNAc...) asparagine glycosylation sites follow: asparagine 3, asparagine 43, and asparagine 123. Cysteines 11 and 68 form a disulfide. The tract at residues 87-144 is secretory tail; it reads KGGTINLPVPGGNTPCTCPPCSCSGCMPKLVYQTDLNVTLENGGQLQYNCHQQACKIK.

In terms of tissue distribution, expressed mainly in lymphoid tissues including spleen, epigonal organ and circulating lymphocytes.

Its subcellular location is the secreted. This Heterodontus francisci (Horn shark) protein is IgW chain C region, secreted form 1/3.